Here is a 502-residue protein sequence, read N- to C-terminus: Cytochrome P450 71B17 (502 aa).

Residues 1–21 traverse the membrane as a helical segment; it reads MAISLLCLFLITFVSLTIVGC. A heme-binding site is contributed by C444.

This sequence belongs to the cytochrome P450 family. Heme is required as a cofactor.

It is found in the membrane. In Arabidopsis thaliana (Mouse-ear cress), this protein is Cytochrome P450 71B17 (CYP71B17).